The chain runs to 45 residues: MSKRTFQPNNRKKAKKHGFRLRMRTRAGRAILAARRGKGRTELSA.

It belongs to the bacterial ribosomal protein bL34 family.

In Clavibacter michiganensis subsp. michiganensis (strain NCPPB 382), this protein is Large ribosomal subunit protein bL34.